Consider the following 187-residue polypeptide: ECF RNA polymerase sigma factor SigW (187 aa).

Positions 3 to 95 are sigma-70 factor domain-2; the sequence is MMIKKRIKQV…RKKKPDYYLD (93 aa). The Polymerase core binding motif lies at 47–50; that stretch reads DIAQ. The tract at residues 125–187 is sigma-70 factor domain-4; that stretch reads ELSNTIQQKI…EALRKQLRDL (63 aa). Residues 166–184 constitute a DNA-binding region (H-T-H motif); the sequence is VGTVKTRIHRGREALRKQL.

Belongs to the sigma-70 factor family. ECF subfamily. In terms of assembly, interacts transiently with the RNA polymerase catalytic core formed by RpoA, RpoB, RpoC and RpoZ (2 alpha, 1 beta, 1 beta' and 1 omega subunit) to form the RNA polymerase holoenzyme that can initiate transcription. Forms a heterodimer with cognate anti-sigma factor RsiW, which prevents it from binding to the -10 and -35 promoter elements.

Extracytoplasmic function (ECF) sigma factors are held in an inactive form by a cognate anti-sigma factor (RsiW for this protein) until released by regulated membrane proteolysis (RIP). RIP occurs when an extracytoplasmic signal (envelope stress) triggers a concerted proteolytic cascade to transmit information and elicit cellular responses. The anti-sigma factor RsiW is a membrane protein, binding sigma-W in the cytoplasm. RsiW is first cut extracytoplasmically (site-1 protease, S1P, by PrsW), then within the membrane itself (site-2 protease, S2P, by RasP), while cytoplasmic proteases (predominantly ClpX-ClpP) finish degrading the regulatory protein, liberating sigma-W. In terms of biological role, sigma factors are initiation factors that promote the attachment of RNA polymerase (RNAP) to specific initiation sites and are then released. Sigma-W controls genes involved in response to cell envelope stress such as antimicrobial peptides, alkaline pH, transport processes and detoxification. The polypeptide is ECF RNA polymerase sigma factor SigW (sigW) (Bacillus subtilis (strain 168)).